The following is a 997-amino-acid chain: Protein Smaug (997 aa).

Residues 1–37 show a composition bias toward polar residues; it reads MKYATGTDNAMTSGISGQTNNSNSASTEMQPTTSTPT. Disordered regions lie at residues 1–69 and 329–370; these read MKYA…QSQP and LCPA…GSSS. Low complexity-rich tracts occupy residues 44 to 69 and 329 to 338; these read TPTATTTATYANGNPNPNANPSQSQP and LCPASGSRSS. Residues Ser564 and Ser575 each carry the phosphoserine modification. The tract at residues 583 to 763 is interaction with cup; sequence EFKPNYIKFH…KDLKFKLSKM (181 aa). An SAM domain is found at 600–654; that stretch reads GIGLWLKSLRLHKYIELFKNMTYEEMLLITEDFLQSVGVTKGASHKLALCIEKLK. Disordered stretches follow at residues 773–892 and 944–972; these read HVKP…MQQM and GSSDNLGLERNQQPQQQQRKLSGGVTSAE. Polar residues-rich tracts occupy residues 802-822 and 854-864; these read NGSNDRINNRKNSNDMLNFSL and HQPQYKSSSYP. Ser970 is subject to Phosphoserine.

The protein belongs to the SMAUG family. In terms of assembly, interacts with oskar (osk). Binds to the 3'-UTR of nos. Interacts with cup, which in turn recruits eIF4-E, leading to an indirect interaction between smg and eIF4-E that prevents mRNA translation.

Its subcellular location is the cytoplasm. Functionally, translation regulator that binds to the 3'-UTR of specific mRNAs such as nanos (nos) and prevent their translation. Prevents translation of unlocalized nos in the bulk cytoplasm via the recruitment of cup. The polypeptide is Protein Smaug (Drosophila erecta (Fruit fly)).